The chain runs to 144 residues: Universal stress protein A homolog 1 (144 aa).

Belongs to the universal stress protein A family. Homodimer.

The protein resides in the cytoplasm. Involved in stress response. In Coxiella burnetii (strain RSA 493 / Nine Mile phase I), this protein is Universal stress protein A homolog 1 (uspA1).